The chain runs to 135 residues: Retinol-binding protein 1 (135 aa).

Residues 22 to 32 are important for interaction with STRA6; sequence RALDVNVALRK. 3 residues coordinate all-trans-retinol: Lys-41, Met-63, and Gln-109.

Belongs to the calycin superfamily. Fatty-acid binding protein (FABP) family. Interacts (only as retinol-free apoprotein) with STRA6.

It localises to the cytoplasm. It is found in the lipid droplet. In terms of biological role, cytoplasmic retinol-binding protein. Accepts retinol from the transport protein STRA6, and thereby contributes to retinol uptake, storage and retinoid homeostasis. The chain is Retinol-binding protein 1 (Rbp1) from Mus musculus (Mouse).